The chain runs to 294 residues: Flagellin B1 (294 aa).

A propeptide spanning residues 1 to 8 (MKTRTRKG) is cleaved from the precursor.

Belongs to the archaeal flagellin family.

It is found in the archaeal flagellum. Its function is as follows. Flagellin is the subunit protein which polymerizes to form the filaments of archaeal flagella. This chain is Flagellin B1 (flaB1), found in Thermococcus kodakarensis (strain ATCC BAA-918 / JCM 12380 / KOD1) (Pyrococcus kodakaraensis (strain KOD1)).